The chain runs to 248 residues: Triosephosphate isomerase (248 aa).

Residue N9–K11 participates in substrate binding. The Electrophile role is filled by H94. E166 serves as the catalytic Proton acceptor. Substrate-binding positions include G172, S212, and G233–G234.

The protein belongs to the triosephosphate isomerase family. In terms of assembly, homodimer.

Its subcellular location is the cytoplasm. The enzyme catalyses D-glyceraldehyde 3-phosphate = dihydroxyacetone phosphate. It participates in carbohydrate biosynthesis; gluconeogenesis. The protein operates within carbohydrate degradation; glycolysis; D-glyceraldehyde 3-phosphate from glycerone phosphate: step 1/1. Involved in the gluconeogenesis. Catalyzes stereospecifically the conversion of dihydroxyacetone phosphate (DHAP) to D-glyceraldehyde-3-phosphate (G3P). In Clostridium perfringens (strain ATCC 13124 / DSM 756 / JCM 1290 / NCIMB 6125 / NCTC 8237 / Type A), this protein is Triosephosphate isomerase.